A 519-amino-acid polypeptide reads, in one-letter code: Protein disulfide-isomerase A5 (519 aa).

A signal peptide spans 1 to 21; that stretch reads MARAGPAWLLLAIWVVLPSWL. 4 disulfide bridges follow: C85/C94, C182/C185, C305/C308, and C426/C429. Thioredoxin domains lie at 134–261, 270–384, and 378–506; these read FLKD…NPQP, PWAD…NPEA, and WMQN…ALRE. Positions 516–519 match the Prevents secretion from ER motif; that stretch reads KEEL.

The protein belongs to the protein disulfide isomerase family. In terms of assembly, interacts with CALR (via P-domain).

The protein localises to the endoplasmic reticulum lumen. The enzyme catalyses Catalyzes the rearrangement of -S-S- bonds in proteins.. The sequence is that of Protein disulfide-isomerase A5 (PDIA5) from Homo sapiens (Human).